Reading from the N-terminus, the 475-residue chain is MKGLPVLLWLCTAVCSSYPLHGSEEDAGMEVLQKYLENYYGLEKDVKQFTKKKDSSPVVKKIQEMQKFLGLKMTGKLDSNTMELMHKPRCGVPDVGGFSTFPGSPKWRKNHISYRIVNYTLDLPRESVDSAIERALKVWEEVTPLTFSRISEGEADIMISFAVEEHGDFIPFDGPGMVLAHAYAPGPGTNGDAHFDDDERWTDDVTGTNLFLVAAHELGHSLGLFHSANAEALMYPVYKSSTDLARFHLSQDDVDGIQSLYGPPTESPDVLVVPTKSNSLDPETLPMCSSALSFDAVSTLRGEVLFFKDRHFWRKSLRTPEPGFYLISSFWPSLPSNMDAAYEVTNRDTVFILKGNQIWAIRGHEELAGYPKSIHTLGLPETVQKIDAAISLKDQKKTYFFVEDKFWRFDEKKQSMDPEFPRKIAENFPGIGTKVDAVFEAFGFLYFFSGSSQLEFDPNAGKVTHILKSNSWFNC.

The N-terminal stretch at 1–17 (MKGLPVLLWLCTAVCSS) is a signal peptide. A propeptide spans 18 to 97 (YPLHGSEEDA…PRCGVPDVGG (80 aa)) (activation peptide). The Cysteine switch signature appears at 88-95 (PRCGVPDV). Cys90 is a Zn(2+) binding site. A glycan (N-linked (GlcNAc...) asparagine) is linked at Asn118. Ca(2+) is bound by residues Asp122 and Asp156. Zn(2+) is bound by residues His166 and Asp168. Residues Asp173, Gly174, Gly176, and Val178 each coordinate Ca(2+). His181 is a Zn(2+) binding site. Residues Gly188, Asn190, and Asp192 each contribute to the Ca(2+) site. Zn(2+) is bound at residue His194. Residues Asp196, Asp197, and Glu199 each coordinate Ca(2+). Position 216 (His216) interacts with Zn(2+). Residue Glu217 is part of the active site. Residues His220 and His226 each contribute to the Zn(2+) site. Hemopexin repeat units lie at residues 285–334 (LPMC…WPSL), 335–381 (PSNM…GLPE), 383–431 (VQKI…FPGI), and 432–475 (GTKV…WFNC). An intrachain disulfide couples Cys288 to Cys475. Position 295 (Asp295) interacts with Ca(2+). Ca(2+)-binding residues include Asp387 and Asp436.

Belongs to the peptidase M10A family. The cofactor is Ca(2+). It depends on Zn(2+) as a cofactor.

The protein resides in the secreted. It localises to the extracellular space. It is found in the extracellular matrix. The catalysed reaction is Preferential cleavage where P1', P2' and P3' are hydrophobic residues.. Inhibited by a synthetic peptide corresponding to the inhibitory cysteine switch motif. Inhibited by ethylenediaminetetraacetic acid (EDTA), 1,10-pheanthroline, 2-mecaptoethanol, dithiothreitol and metalloproteinase inhibitor protein TIMP. In terms of biological role, can degrade fibronectin, laminin, gelatins of type I, III, IV, and V; collagens III, IV, X, and IX, and cartilage proteoglycans. Activates procollagenase. Its function is as follows. Metalloproteinase with a rather broad substrate specificity that can degrade fibronectin, laminin, gelatins of type I, III, IV, and V; collagens III, IV, X, and IX, and cartilage proteoglycans. Activates different molecules including growth factors, plasminogen or other matrix metalloproteinases such as MMP9. Once released into the extracellular matrix (ECM), the inactive pro-enzyme is activated by the plasmin cascade signaling pathway. Also acts intracellularly. For example, in dopaminergic neurons, gets activated by the serine protease HTRA2 upon stress and plays a pivotal role in DA neuronal degeneration by mediating microglial activation and alpha-synuclein/SNCA cleavage. In addition, plays a role in immune response and possesses antiviral activity against various viruses. Mechanistically, translocates from the cytoplasm into the cell nucleus upon virus infection to influence NF-kappa-B activities. In Rattus norvegicus (Rat), this protein is Stromelysin-1 (Mmp3).